The chain runs to 288 residues: 4-hydroxy-3-methylbut-2-enyl diphosphate reductase (288 aa).

Residue Cys-12 coordinates [4Fe-4S] cluster. 2 residues coordinate (2E)-4-hydroxy-3-methylbut-2-enyl diphosphate: His-42 and His-77. Residues His-42 and His-77 each coordinate dimethylallyl diphosphate. The isopentenyl diphosphate site is built by His-42 and His-77. Position 99 (Cys-99) interacts with [4Fe-4S] cluster. His-127 contributes to the (2E)-4-hydroxy-3-methylbut-2-enyl diphosphate binding site. His-127 is a dimethylallyl diphosphate binding site. Isopentenyl diphosphate is bound at residue His-127. The active-site Proton donor is Glu-129. Thr-165 contacts (2E)-4-hydroxy-3-methylbut-2-enyl diphosphate. Position 193 (Cys-193) interacts with [4Fe-4S] cluster. Ser-221, Ser-222, Asn-223, and Ser-265 together coordinate (2E)-4-hydroxy-3-methylbut-2-enyl diphosphate. Dimethylallyl diphosphate contacts are provided by Ser-221, Ser-222, Asn-223, and Ser-265. The isopentenyl diphosphate site is built by Ser-221, Ser-222, Asn-223, and Ser-265.

Belongs to the IspH family. [4Fe-4S] cluster serves as cofactor.

The catalysed reaction is isopentenyl diphosphate + 2 oxidized [2Fe-2S]-[ferredoxin] + H2O = (2E)-4-hydroxy-3-methylbut-2-enyl diphosphate + 2 reduced [2Fe-2S]-[ferredoxin] + 2 H(+). It carries out the reaction dimethylallyl diphosphate + 2 oxidized [2Fe-2S]-[ferredoxin] + H2O = (2E)-4-hydroxy-3-methylbut-2-enyl diphosphate + 2 reduced [2Fe-2S]-[ferredoxin] + 2 H(+). It participates in isoprenoid biosynthesis; dimethylallyl diphosphate biosynthesis; dimethylallyl diphosphate from (2E)-4-hydroxy-3-methylbutenyl diphosphate: step 1/1. It functions in the pathway isoprenoid biosynthesis; isopentenyl diphosphate biosynthesis via DXP pathway; isopentenyl diphosphate from 1-deoxy-D-xylulose 5-phosphate: step 6/6. Functionally, catalyzes the conversion of 1-hydroxy-2-methyl-2-(E)-butenyl 4-diphosphate (HMBPP) into a mixture of isopentenyl diphosphate (IPP) and dimethylallyl diphosphate (DMAPP). Acts in the terminal step of the DOXP/MEP pathway for isoprenoid precursor biosynthesis. The protein is 4-hydroxy-3-methylbut-2-enyl diphosphate reductase of Caldanaerobacter subterraneus subsp. tengcongensis (strain DSM 15242 / JCM 11007 / NBRC 100824 / MB4) (Thermoanaerobacter tengcongensis).